Consider the following 70-residue polypeptide: Large ribosomal subunit protein uL29 (70 aa).

Belongs to the universal ribosomal protein uL29 family.

The polypeptide is Large ribosomal subunit protein uL29 (rpl29) (Methanocaldococcus jannaschii (strain ATCC 43067 / DSM 2661 / JAL-1 / JCM 10045 / NBRC 100440) (Methanococcus jannaschii)).